Reading from the N-terminus, the 288-residue chain is Fructose-bisphosphate aldolase (288 aa).

Residue Ser49 participates in D-glyceraldehyde 3-phosphate binding. The Proton donor role is filled by Asp84. 4 residues coordinate Zn(2+): His85, Asp105, Glu135, and His177. Gly178 contacts dihydroxyacetone phosphate. Position 206 (His206) interacts with Zn(2+). Dihydroxyacetone phosphate-binding positions include Gly207–Ser209 and Asn228–Thr231.

It belongs to the class II fructose-bisphosphate aldolase family. In terms of assembly, homodimer. Requires Zn(2+) as cofactor.

The catalysed reaction is beta-D-fructose 1,6-bisphosphate = D-glyceraldehyde 3-phosphate + dihydroxyacetone phosphate. It functions in the pathway carbohydrate degradation; glycolysis; D-glyceraldehyde 3-phosphate and glycerone phosphate from D-glucose: step 4/4. Catalyzes the aldol condensation of dihydroxyacetone phosphate (DHAP or glycerone-phosphate) with glyceraldehyde 3-phosphate (G3P) to form fructose 1,6-bisphosphate (FBP) in gluconeogenesis and the reverse reaction in glycolysis. The sequence is that of Fructose-bisphosphate aldolase (fba) from Mycoplasma pneumoniae (strain ATCC 29342 / M129 / Subtype 1) (Mycoplasmoides pneumoniae).